The sequence spans 842 residues: Envelope glycoprotein H (842 aa).

A signal peptide spans 1–20; that stretch reads MRRPLCAALLAAAVLALAAG. Over 21–802 the chain is Virion surface; the sequence is APAAARGGAG…AGHEAPTFSP (782 aa). Residues Asn-77 and Asn-112 are each glycosylated (N-linked (GlcNAc...) asparagine; by host). The interval 240 to 303 is interaction with gL; the sequence is ERAAARLAVG…AAGPQRRAYV (64 aa). N-linked (GlcNAc...) asparagine; by host glycosylation is found at Asn-617, Asn-666, Asn-760, and Asn-783. Residues 803 to 823 traverse the membrane as a helical segment; the sequence is AYVWASVGGALVAGTTIYAIA. The Intravirion segment spans residues 824–842; sequence KMLCSSVPLARGYSSVPVF.

The protein belongs to the herpesviridae glycoprotein H family. In terms of assembly, interacts with glycoprotein L (gL); this interaction is necessary for the correct processing and cell surface expression of gH. The heterodimer gH/gL seems to interact with gB trimers during fusion. In terms of processing, N-glycosylated, O-glycosylated, and sialylated.

The protein localises to the virion membrane. It is found in the host cell membrane. Its subcellular location is the host endosome membrane. Its function is as follows. The heterodimer glycoprotein H-glycoprotein L is required for the fusion of viral and plasma membranes leading to virus entry into the host cell. Following initial binding to host receptor, membrane fusion is mediated by the fusion machinery composed of gB and the heterodimer gH/gL. May also be involved in the fusion between the virion envelope and the outer nuclear membrane during virion morphogenesis. In Bos taurus (Bovine), this protein is Envelope glycoprotein H.